A 305-amino-acid chain; its full sequence is Endonuclease III-like protein 1 (305 aa).

The transit peptide at 1–28 (MNAAGVRMVVTRARSRGTGASLRRRGEK) directs the protein to the mitochondrion. The interval 1-83 (MNAAGVRMVV…HLQAPSWQPQ (83 aa)) is disordered. Residue Ser64 is modified to Phosphoserine. The 25-residue stretch at 192 to 216 (RYDGDIPASVAELVALPGVGPKMAH) folds into the HhH domain. Lys213 acts as the Nucleophile; for N-glycosylase activity in catalysis. Cys283, Cys290, Cys293, and Cys299 together coordinate [4Fe-4S] cluster.

The protein belongs to the Nth/MutY family. In terms of assembly, interacts with YBX1. Interacts with ERCC5/XPG; the interaction stimulates NTHL1 activity and NTHL1 binding to its DNA substrate. It depends on [4Fe-4S] cluster as a cofactor.

It localises to the nucleus. Its subcellular location is the mitochondrion. The enzyme catalyses 2'-deoxyribonucleotide-(2'-deoxyribose 5'-phosphate)-2'-deoxyribonucleotide-DNA = a 3'-end 2'-deoxyribonucleotide-(2,3-dehydro-2,3-deoxyribose 5'-phosphate)-DNA + a 5'-end 5'-phospho-2'-deoxyribonucleoside-DNA + H(+). In terms of biological role, bifunctional DNA N-glycosylase with associated apurinic/apyrimidinic (AP) lyase function that catalyzes the first step in base excision repair (BER), the primary repair pathway for the repair of oxidative DNA damage. The DNA N-glycosylase activity releases the damaged DNA base from DNA by cleaving the N-glycosidic bond, leaving an AP site. The AP lyase activity cleaves the phosphodiester bond 3' to the AP site by a beta-elimination. Primarily recognizes and repairs oxidative base damage of pyrimidines. The sequence is that of Endonuclease III-like protein 1 from Bos taurus (Bovine).